The sequence spans 1084 residues: Histone deacetylase 4 (1084 aa).

Residues 67–177 (REQQLQQELL…STEVKMKLQE (111 aa)) adopt a coiled-coil conformation. Residues 118-313 (MLAMKHQQEL…NNSSGSVSAE (196 aa)) are interaction with MEF2A. Residues 133–163 (KLERHRQEQELEKQHREQKLQQLKNKEKGKE) are compositionally biased toward basic and acidic residues. 3 disordered regions span residues 133–166 (KLER…ESAV), 206–226 (TQHS…TSYN), and 240–315 (PLRK…AENG). Ser-210 is subject to Phosphoserine. A Phosphoserine; by CaMK4 and SIK1 modification is found at Ser-246. Basic and acidic residues predominate over residues 259–274 (KVAERRSSPLLRRKDG). Residues 290–312 (SACSSAPGSGPSSPNNSSGSVSA) show a composition bias toward low complexity. The PxLPxI/L motif; mediates interaction with ANKRA2 and 14-3-3 proteins signature appears at 349–354 (PSLPNI). Ser-350 carries the post-translational modification Phosphoserine. Phosphoserine; by CaMK4 and SIK1 is present on Ser-467. Disordered stretches follow at residues 509-531 (PKPS…ELRE), 548-585 (KEAH…QPSE), and 626-646 (PLSR…VQEP). Positions 516-531 (RQPESHPEETEEELRE) are enriched in basic and acidic residues. Lys-559 participates in a covalent cross-link: Glycyl lysine isopeptide (Lys-Gly) (interchain with G-Cter in SUMO). Ser-565 is subject to Phosphoserine. The segment covering 629 to 641 (RAQSSPASATFPV) has biased composition (polar residues). Residue Ser-632 is modified to Phosphoserine; by CaMK4. Ser-633 carries the phosphoserine modification. The tract at residues 655-1084 (GLVYDTLMLK…EEPMEEEPPL (430 aa)) is histone deacetylase. Zn(2+)-binding residues include Cys-667, Cys-669, His-675, and Cys-751. His-803 is an active-site residue. Residues 1051 to 1084 (EEAETVTAMASLSVGVKPAEKRPDEEPMEEEPPL) carry the Nuclear export signal motif. The disordered stretch occupies residues 1061–1084 (SLSVGVKPAEKRPDEEPMEEEPPL).

It belongs to the histone deacetylase family. HD type 2 subfamily. Homodimer. Homodimerization via its N-terminal domain. Interacts with MEF2A. Interacts with MEF2C and MEF2D. Interacts with AHRR. Interacts with NR2C1. Interacts with HDAC7. Interacts with a 14-3-3 chaperone proteins in a phosphorylation dependent manner. Interacts with 14-3-3 protein YWHAB. Interacts with BTBD14B. Interacts with KDM5B. Interacts with MYOCD. Interacts with MORC2. Interacts (via PxLPxI/L motif) with ANKRA2 (via ankyrin repeats). Interacts with CUL7 (as part of the 3M complex); negatively regulated by ANKRA2. Interacts with EP300 in the presence of TFAP2C. Interacts with HSPA1A and HSPA1B leading to their deacetylation at 'Lys-77'. Interacts with ZBTB7B; the interaction allows the recruitment of HDAC4 on CD8 loci for deacetylation and possible inhibition of CD8 genes expression. Interacts with DHX36. Interacts with SIK3; this interaction leads to HDAC4 retention in the cytoplasm. Interacts with ZNF638. Post-translationally, phosphorylated by CaMK4 at Ser-246, Ser-467 and Ser-632. Phosphorylation at other residues by CaMK2D is required for the interaction with 14-3-3. Phosphorylation at Ser-350, within the PxLPxI/L motif, impairs the binding of ANKRA2 but generates a high-affinity docking site for 14-3-3. Sumoylation on Lys-559 is promoted by the E3 SUMO-protein ligase RANBP2, and prevented by phosphorylation by CaMK4. In terms of tissue distribution, ubiquitous.

It localises to the nucleus. The protein resides in the cytoplasm. The catalysed reaction is N(6)-acetyl-L-lysyl-[histone] + H2O = L-lysyl-[histone] + acetate. Its function is as follows. Responsible for the deacetylation of lysine residues on the N-terminal part of the core histones (H2A, H2B, H3 and H4). Histone deacetylation gives a tag for epigenetic repression and plays an important role in transcriptional regulation, cell cycle progression and developmental events. Histone deacetylases act via the formation of large multiprotein complexes. Involved in muscle maturation via its interaction with the myocyte enhancer factors such as MEF2A, MEF2C and MEF2D. Involved in the MTA1-mediated epigenetic regulation of ESR1 expression in breast cancer. Deacetylates HSPA1A and HSPA1B at 'Lys-77' leading to their preferential binding to co-chaperone STUB1. This is Histone deacetylase 4 from Homo sapiens (Human).